A 95-amino-acid polypeptide reads, in one-letter code: Aspartyl/glutamyl-tRNA(Asn/Gln) amidotransferase subunit C (95 aa).

Belongs to the GatC family. As to quaternary structure, heterotrimer of A, B and C subunits.

The catalysed reaction is L-glutamyl-tRNA(Gln) + L-glutamine + ATP + H2O = L-glutaminyl-tRNA(Gln) + L-glutamate + ADP + phosphate + H(+). It carries out the reaction L-aspartyl-tRNA(Asn) + L-glutamine + ATP + H2O = L-asparaginyl-tRNA(Asn) + L-glutamate + ADP + phosphate + 2 H(+). Its function is as follows. Allows the formation of correctly charged Asn-tRNA(Asn) or Gln-tRNA(Gln) through the transamidation of misacylated Asp-tRNA(Asn) or Glu-tRNA(Gln) in organisms which lack either or both of asparaginyl-tRNA or glutaminyl-tRNA synthetases. The reaction takes place in the presence of glutamine and ATP through an activated phospho-Asp-tRNA(Asn) or phospho-Glu-tRNA(Gln). This is Aspartyl/glutamyl-tRNA(Asn/Gln) amidotransferase subunit C from Bartonella quintana (strain Toulouse) (Rochalimaea quintana).